The primary structure comprises 333 residues: Cap-specific mRNA (nucleoside-2'-O-)-methyltransferase (333 aa).

MRNA is bound at residue tyrosine 22. Residues glutamine 39, tyrosine 66, glycine 68, glycine 72, aspartate 95, arginine 97, valine 116, and aspartate 138 each contribute to the S-adenosyl-L-methionine site. The interval 169–249 (PVASSLKWRC…NKIVRNKVVV (81 aa)) is binding to NPH-I. Positions 169–333 (PVASSLKWRC…NSKRSVRGNK (165 aa)) are binding to Rap94. The active-site For methyltransferase activity is the lysine 175. MRNA contacts are provided by residues 177–180 (RCPF), aspartate 182, 205–207 (SAE), and glutamate 233.

Belongs to the class I-like SAM-binding methyltransferase superfamily. Poxvirus/kinetoplastid 2'-O-MTase family. In terms of assembly, interacts with poly(A) polymerase catalytic subunit OPG063. Interacts with OPG109 and OPG123; these interactions might help linking transcription to capping and polyadenylation.

The protein localises to the virion. It catalyses the reaction a 5'-end (N(7)-methyl 5'-triphosphoguanosine)-ribonucleoside in mRNA + S-adenosyl-L-methionine = a 5'-end (N(7)-methyl 5'-triphosphoguanosine)-(2'-O-methyl-ribonucleoside) in mRNA + S-adenosyl-L-homocysteine + H(+). In terms of biological role, displays methyltransferase, positive regulation of the poly(A) polymerase and transcription elongation activities. Involved in the modification of both mRNA ends and in intermediate and late gene positive transcription elongation. At the mRNAs 5' end, methylates the ribose 2' OH group of the first transcribed nucleotide, thereby producing a 2'-O-methylpurine cap. At the 3' end, functions as a processivity factor which stimulates the activity of the viral poly(A) polymerase OPG063 that creates mRNA's poly(A) tail. In the presence of OPG102, OPG063 does not dissociate from the RNA allowing tail elongation to around 250 adenylates. In Homo sapiens (Human), this protein is Cap-specific mRNA (nucleoside-2'-O-)-methyltransferase (OPG102).